Reading from the N-terminus, the 455-residue chain is Bifunctional protein GlmU (455 aa).

The segment at 1 to 225 is pyrophosphorylase; the sequence is MNIVILAAGL…EWETLGVNSK (225 aa). UDP-N-acetyl-alpha-D-glucosamine-binding positions include 6 to 9, Lys-20, Gln-71, 76 to 77, 98 to 100, Gly-135, Glu-150, Asn-165, and Asn-223; these read LAAG, GT, and YGD. Asp-100 serves as a coordination point for Mg(2+). Mg(2+) is bound at residue Asn-223. The linker stretch occupies residues 226–246; the sequence is VQLAELERIHQRNLAQQLLED. Residues 247–455 are N-acetyltransferase; that stretch reads GVTLIDPARI…QRPVKQKKDA (209 aa). UDP-N-acetyl-alpha-D-glucosamine contacts are provided by Arg-329 and Lys-347. His-359 serves as the catalytic Proton acceptor. UDP-N-acetyl-alpha-D-glucosamine contacts are provided by Tyr-362 and Asn-373. Acetyl-CoA is bound by residues Ala-376, 382–383, Ser-401, Ala-419, and Arg-436; that span reads NY.

The protein in the N-terminal section; belongs to the N-acetylglucosamine-1-phosphate uridyltransferase family. It in the C-terminal section; belongs to the transferase hexapeptide repeat family. As to quaternary structure, homotrimer. The cofactor is Mg(2+).

It is found in the cytoplasm. It carries out the reaction alpha-D-glucosamine 1-phosphate + acetyl-CoA = N-acetyl-alpha-D-glucosamine 1-phosphate + CoA + H(+). It catalyses the reaction N-acetyl-alpha-D-glucosamine 1-phosphate + UTP + H(+) = UDP-N-acetyl-alpha-D-glucosamine + diphosphate. Its pathway is nucleotide-sugar biosynthesis; UDP-N-acetyl-alpha-D-glucosamine biosynthesis; N-acetyl-alpha-D-glucosamine 1-phosphate from alpha-D-glucosamine 6-phosphate (route II): step 2/2. It functions in the pathway nucleotide-sugar biosynthesis; UDP-N-acetyl-alpha-D-glucosamine biosynthesis; UDP-N-acetyl-alpha-D-glucosamine from N-acetyl-alpha-D-glucosamine 1-phosphate: step 1/1. The protein operates within bacterial outer membrane biogenesis; LPS lipid A biosynthesis. Its function is as follows. Catalyzes the last two sequential reactions in the de novo biosynthetic pathway for UDP-N-acetylglucosamine (UDP-GlcNAc). The C-terminal domain catalyzes the transfer of acetyl group from acetyl coenzyme A to glucosamine-1-phosphate (GlcN-1-P) to produce N-acetylglucosamine-1-phosphate (GlcNAc-1-P), which is converted into UDP-GlcNAc by the transfer of uridine 5-monophosphate (from uridine 5-triphosphate), a reaction catalyzed by the N-terminal domain. In Ralstonia nicotianae (strain ATCC BAA-1114 / GMI1000) (Ralstonia solanacearum), this protein is Bifunctional protein GlmU.